Consider the following 278-residue polypeptide: Small ribosomal subunit protein uS2 (278 aa).

A disordered region spans residues 233–257; the sequence is IDMEAAGEAPANKGKKKSVKARLDK.

This sequence belongs to the universal ribosomal protein uS2 family.

The chain is Small ribosomal subunit protein uS2 from Bacteroides thetaiotaomicron (strain ATCC 29148 / DSM 2079 / JCM 5827 / CCUG 10774 / NCTC 10582 / VPI-5482 / E50).